A 283-amino-acid chain; its full sequence is Syntaxin VAM3 (283 aa).

The segment at 1-26 is disordered; sequence MSFFDIEAQSSKGNSQQEPQFSTNQK. At 1-261 the chain is on the cytoplasmic side; it reads MSFFDIEAQS…ADQHQRDRNK (261 aa). Residues 8–25 show a composition bias toward polar residues; the sequence is AQSSKGNSQQEPQFSTNQ. 2 coiled-coil regions span residues 28–48 and 84–111; these read KELS…EKEC and LIHQ…SYNQ. Disordered stretches follow at residues 116–146 and 162–182; these read FPLK…DPES and NEGQ…QGLS. Residues 127-144 show a composition bias toward basic and acidic residues; it reads SKERKDIHPRTEAVRQDP. Residues 169–189 are a coiled coil; sequence QLQEEQEQQQQGLSQEELDFQ. In terms of domain architecture, t-SNARE coiled-coil homology spans 190–252; that stretch reads TIIHQERSQQ…QNANKQLTRA (63 aa). The chain crosses the membrane as a helical; Anchor for type IV membrane protein span at residues 262-282; that stretch reads CGKVTLIIIIVVCMVVLLAVL. Ser-283 is a topological domain (vacuolar).

The protein belongs to the syntaxin family. As to quaternary structure, associates with VAM7.

The protein localises to the vacuole membrane. Required for vacuolar assembly. Provides the t-SNARE function in a late step of the vacuolar assembly. Required for homotypic vacuole membrane fusion, autophagy and fusion of biosynthetic transport vesicles with the vacuole. Required for the delivery of alpha-factor receptor-ligand complexes to the vacuole. The sequence is that of Syntaxin VAM3 (VAM3) from Saccharomyces cerevisiae (strain ATCC 204508 / S288c) (Baker's yeast).